We begin with the raw amino-acid sequence, 480 residues long: Aspartyl/glutamyl-tRNA(Asn/Gln) amidotransferase subunit B (480 aa).

This sequence belongs to the GatB/GatE family. GatB subfamily. In terms of assembly, heterotrimer of A, B and C subunits.

It carries out the reaction L-glutamyl-tRNA(Gln) + L-glutamine + ATP + H2O = L-glutaminyl-tRNA(Gln) + L-glutamate + ADP + phosphate + H(+). The catalysed reaction is L-aspartyl-tRNA(Asn) + L-glutamine + ATP + H2O = L-asparaginyl-tRNA(Asn) + L-glutamate + ADP + phosphate + 2 H(+). Its function is as follows. Allows the formation of correctly charged Asn-tRNA(Asn) or Gln-tRNA(Gln) through the transamidation of misacylated Asp-tRNA(Asn) or Glu-tRNA(Gln) in organisms which lack either or both of asparaginyl-tRNA or glutaminyl-tRNA synthetases. The reaction takes place in the presence of glutamine and ATP through an activated phospho-Asp-tRNA(Asn) or phospho-Glu-tRNA(Gln). The sequence is that of Aspartyl/glutamyl-tRNA(Asn/Gln) amidotransferase subunit B from Streptococcus pneumoniae (strain P1031).